A 280-amino-acid chain; its full sequence is uncharacterized protein (280 aa).

3 helical membrane-spanning segments follow: residues 10–29, 164–186, and 209–228; these read IQQNGILTAVITGIVALLFN, FVFVRWFKETLAFFVGASAFAFI, and IFGLSCSALYIFWIIHYFLL.

It localises to the cell membrane. This is an uncharacterized protein from Bacillus subtilis (strain 168).